Here is a 449-residue protein sequence, read N- to C-terminus: tRNA (guanine(37)-N(1))-methyltransferase (449 aa).

S-adenosyl-L-methionine contacts are provided by residues His-216, 254 to 255 (DL), 282 to 283 (DG), and Asn-345.

The protein belongs to the class I-like SAM-binding methyltransferase superfamily. TRM5/TYW2 family. Monomer.

It is found in the mitochondrion matrix. It localises to the nucleus. The protein localises to the cytoplasm. The catalysed reaction is guanosine(37) in tRNA + S-adenosyl-L-methionine = N(1)-methylguanosine(37) in tRNA + S-adenosyl-L-homocysteine + H(+). In terms of biological role, specifically methylates the N1 position of guanosine-37 in various cytoplasmic and mitochondrial tRNAs. Methylation is not dependent on the nature of the nucleoside 5' of the target nucleoside. This is the first step in the biosynthesis of wybutosine (yW), a modified base adjacent to the anticodon of tRNAs and required for accurate decoding. The protein is tRNA (guanine(37)-N(1))-methyltransferase of Candida albicans (strain SC5314 / ATCC MYA-2876) (Yeast).